The following is a 262-amino-acid chain: Indole-3-glycerol phosphate synthase (262 aa).

It belongs to the TrpC family.

The catalysed reaction is 1-(2-carboxyphenylamino)-1-deoxy-D-ribulose 5-phosphate + H(+) = (1S,2R)-1-C-(indol-3-yl)glycerol 3-phosphate + CO2 + H2O. Its pathway is amino-acid biosynthesis; L-tryptophan biosynthesis; L-tryptophan from chorismate: step 4/5. The polypeptide is Indole-3-glycerol phosphate synthase (Staphylococcus epidermidis (strain ATCC 12228 / FDA PCI 1200)).